The primary structure comprises 283 residues: Protein FAM170A (283 aa).

Disordered regions lie at residues 1–54 (MKRR…RSQH) and 123–171 (GTPP…AKTP). Positions 127 to 138 (SDVSTRNLLSDS) are enriched in polar residues. Basic and acidic residues predominate over residues 142 to 153 (GEEKEHEERTES). Residue T170 is modified to Phosphothreonine. The C2H2-type; degenerate zinc-finger motif lies at 181–205 (FRCMACCRVFTTMEALQEHVQFGIR). The disordered stretch occupies residues 223-283 (NMESESTQDE…VFHSPKDRNS (61 aa)). Over residues 228–246 (STQDEQEEENGNEKEEEEK) the composition is skewed to acidic residues. Phosphoserine is present on S268.

The protein belongs to the FAM170 family.

It is found in the nucleus. Functionally, acts as a nuclear transcription factor that positively regulates the expression of heat shock genes. Binds to heat shock promoter elements (HSE). The sequence is that of Protein FAM170A (FAM170A) from Macaca fascicularis (Crab-eating macaque).